Reading from the N-terminus, the 228-residue chain is MQHVAIIMDGNGRWAERRGLRRSAGHRRGLQTAREIVAALCAIRVPFVTLYVFSTENWKRSAHEVHFLMNLIRWYLKKEMSFYVEHAIRVVHLGCAQTLPPDVRSQIEYVVERTRSHRGTTVALAINYGGKDEILRAVKKVLCSTSCPDGELLTEEAFGACLDAPQLPSVDFLIRTGGQQRMSNFLLWQSAYAEFYFTDILWPDFRVEDMLRALDEYRLRTRTFGGLE.

The active site involves Asp-9. Asp-9 is a Mg(2+) binding site. Residues 10–13 (GNGR), Trp-14, Arg-22, His-26, and 54–56 (STE) each bind substrate. Residue Asn-57 is the Proton acceptor of the active site. Substrate contacts are provided by residues Trp-58, Arg-60, Arg-175, and 181–183 (RMS). Residue Glu-194 coordinates Mg(2+).

This sequence belongs to the UPP synthase family. As to quaternary structure, homodimer. Mg(2+) is required as a cofactor.

Functionally, catalyzes the condensation of isopentenyl diphosphate (IPP) with allylic pyrophosphates generating different type of terpenoids. The chain is Isoprenyl transferase from Treponema pallidum (strain Nichols).